A 206-amino-acid polypeptide reads, in one-letter code: Proteasome subunit beta 1 (206 aa).

Residues 1-14 constitute a propeptide, removed in mature form; by autocatalysis; the sequence is MSRIHNDPKVLLTG. Threonine 15 functions as the Nucleophile in the catalytic mechanism.

The protein belongs to the peptidase T1B family. The 20S proteasome core is composed of 14 alpha and 14 beta subunits that assemble into four stacked heptameric rings, resulting in a barrel-shaped structure. The two inner rings, each composed of seven catalytic beta subunits, are sandwiched by two outer rings, each composed of seven alpha subunits. The catalytic chamber with the active sites is on the inside of the barrel. Has a gated structure, the ends of the cylinder being occluded by the N-termini of the alpha-subunits. Is capped at one or both ends by the proteasome regulatory ATPase, PAN.

It localises to the cytoplasm. The enzyme catalyses Cleavage of peptide bonds with very broad specificity.. The formation of the proteasomal ATPase PAN-20S proteasome complex, via the docking of the C-termini of PAN into the intersubunit pockets in the alpha-rings, triggers opening of the gate for substrate entry. Interconversion between the open-gate and close-gate conformations leads to a dynamic regulation of the 20S proteasome proteolysis activity. In terms of biological role, component of the proteasome core, a large protease complex with broad specificity involved in protein degradation. This Caldivirga maquilingensis (strain ATCC 700844 / DSM 13496 / JCM 10307 / IC-167) protein is Proteasome subunit beta 1.